The chain runs to 87 residues: Small ribosomal subunit protein bS20 (87 aa).

Positions 1 to 22 (MANSPQAKKRARQNEKRFAINK) are disordered.

It belongs to the bacterial ribosomal protein bS20 family.

In terms of biological role, binds directly to 16S ribosomal RNA. This is Small ribosomal subunit protein bS20 from Ruegeria sp. (strain TM1040) (Silicibacter sp.).